The sequence spans 422 residues: Histidine--tRNA ligase (422 aa).

Belongs to the class-II aminoacyl-tRNA synthetase family. As to quaternary structure, homodimer.

The protein localises to the cytoplasm. The catalysed reaction is tRNA(His) + L-histidine + ATP = L-histidyl-tRNA(His) + AMP + diphosphate + H(+). The sequence is that of Histidine--tRNA ligase from Aliivibrio fischeri (strain ATCC 700601 / ES114) (Vibrio fischeri).